A 320-amino-acid chain; its full sequence is Thymidylate synthase (320 aa).

DUMP-binding positions include Arg-27 and 182 to 183 (RR). The active-site Nucleophile is the Cys-202. DUMP is bound by residues 222–225 (RSAD), Asn-233, and 263–265 (HIY). Asp-225 contacts (6R)-5,10-methylene-5,6,7,8-tetrahydrofolate. Ala-319 lines the (6R)-5,10-methylene-5,6,7,8-tetrahydrofolate pocket.

It belongs to the thymidylate synthase family. Bacterial-type ThyA subfamily. In terms of assembly, homodimer.

The protein resides in the cytoplasm. It carries out the reaction dUMP + (6R)-5,10-methylene-5,6,7,8-tetrahydrofolate = 7,8-dihydrofolate + dTMP. The protein operates within pyrimidine metabolism; dTTP biosynthesis. Functionally, catalyzes the reductive methylation of 2'-deoxyuridine-5'-monophosphate (dUMP) to 2'-deoxythymidine-5'-monophosphate (dTMP) while utilizing 5,10-methylenetetrahydrofolate (mTHF) as the methyl donor and reductant in the reaction, yielding dihydrofolate (DHF) as a by-product. This enzymatic reaction provides an intracellular de novo source of dTMP, an essential precursor for DNA biosynthesis. This Limosilactobacillus reuteri (strain DSM 20016) (Lactobacillus reuteri) protein is Thymidylate synthase.